We begin with the raw amino-acid sequence, 663 residues long: (R)-specific secondary-alkylsulfatase (663 aa).

Residues 1 to 28 form the signal peptide; the sequence is MSRFIRASQRRTLLATLIAATLAQPLLA. Zn(2+)-binding residues include histidine 179, histidine 181, aspartate 183, and histidine 184. Glutamine 232 provides a ligand contact to sulfate. Zn(2+) is bound by residues glutamate 291 and aspartate 310. Residues 318–323 and arginine 328 each bind sulfate; that span reads NLLTPR. Residue histidine 355 participates in Zn(2+) binding. Position 417 (tyrosine 417) interacts with sulfate.

It belongs to the metallo-beta-lactamase superfamily. Type III sulfatase family. Homodimer.

The enzyme catalyses an (R)-secondary-alkyl sulfate + H2O = an (S)-secondary-alcohol + sulfate.. Alkylsulfatase that catalyzes the enantioselective hydrolysis of secondary-alkylsulfates with strict inversion of configuration, leading to the formation of homochiral (S)-configurated alcohols and nonreacted sulfate esters. The substrate spectrum includes a range of linear, branched or cyclic sec-alkylsulfates. Can use sec-alkylsulfate esters bearing aromatic, olefinic and acetylenic moieties. Acts by cleaving the C-O bond, resulting in inversion at the carbon. This Pseudomonas sp protein is (R)-specific secondary-alkylsulfatase.